The following is a 343-amino-acid chain: L-lysine cyclodeaminase (343 aa).

It belongs to the ornithine cyclodeaminase/mu-crystallin family. NAD(+) is required as a cofactor.

It catalyses the reaction L-lysine = L-pipecolate + NH4(+). It functions in the pathway antibiotic biosynthesis. Its activity is regulated as follows. Inhibited by nipecotic acid and thiazolidine-2-carboxylic acid. Its function is as follows. Converts L-lysine to L-pipecolate, which is incorporated into multiple secondary metabolite products, including rapamycin, tobulysin, virginiamycin and pristinamycin. This Streptomyces rapamycinicus (strain ATCC 29253 / DSM 41530 / NRRL 5491 / AYB-994) (Streptomyces hygroscopicus (strain ATCC 29253)) protein is L-lysine cyclodeaminase (rapL).